We begin with the raw amino-acid sequence, 300 residues long: Glycerol-3-phosphate dehydrogenase [NAD(P)+] (300 aa).

Residues tryptophan 11, lysine 33, and lysine 79 each contribute to the NADPH site. Residues lysine 79, glycine 107, and serine 109 each coordinate sn-glycerol 3-phosphate. An NADPH-binding site is contributed by alanine 111. Residues lysine 161, aspartate 214, serine 224, arginine 225, and asparagine 226 each coordinate sn-glycerol 3-phosphate. Lysine 161 (proton acceptor) is an active-site residue. Arginine 225 contributes to the NADPH binding site. NADPH-binding residues include valine 249 and glutamate 251.

The protein belongs to the NAD-dependent glycerol-3-phosphate dehydrogenase family.

The protein resides in the cytoplasm. The catalysed reaction is sn-glycerol 3-phosphate + NAD(+) = dihydroxyacetone phosphate + NADH + H(+). It carries out the reaction sn-glycerol 3-phosphate + NADP(+) = dihydroxyacetone phosphate + NADPH + H(+). The protein operates within membrane lipid metabolism; glycerophospholipid metabolism. Catalyzes the reduction of the glycolytic intermediate dihydroxyacetone phosphate (DHAP) to sn-glycerol 3-phosphate (G3P), the key precursor for phospholipid synthesis. The chain is Glycerol-3-phosphate dehydrogenase [NAD(P)+] from Campylobacter lari (strain RM2100 / D67 / ATCC BAA-1060).